Here is a 440-residue protein sequence, read N- to C-terminus: MLERYANEEMKALWNEQTKFETYLEVEKAVVRAWNKLGQIQDSDCEKICAKAAFNLERIKEIEKTTKHDLIAFTTCVAESLGEESRFFHYGITSSDCIDTAMALLMTKSLKLIQKGVKNLYETLKNRALEHKDTLMVGRSHGVFGEPITFGLVLALFADEIKRHLKALDLTMEFISVGAISGAMGNFAHAPLELEELACEFLGLKTANISNQVIQRDRYARLACDLALLASSCEKIAVNIRHLQRSEVYEVEEAFSTGQKGSSAMPHKRNPILSENITGLCRVIRSFTTPMLENVALWHERDMSHSSVERFALPDLFITSDFMLSRLNSVIKNLVVYPKNMLKNLALSGGLVFSQRVLLELPKKGLSREESYSIVQENAMKIWEVLQQGAFKNTDENLFLNALLNDERLKKYLSEDEIKACFDYNYYTKNVGAIFKRVFE.

N(6)-(1,2-dicarboxyethyl)-AMP-binding positions include Arg4–Tyr5, Lys67–Asp69, and Thr93–Ser94. The active-site Proton donor/acceptor is His141. Gln212 contributes to the N(6)-(1,2-dicarboxyethyl)-AMP binding site. Ser262 serves as the catalytic Proton donor/acceptor. Residues Ser263, Lys268–Asn270, Asn276, and Ser307–Phe311 each bind N(6)-(1,2-dicarboxyethyl)-AMP.

The protein belongs to the lyase 1 family. Adenylosuccinate lyase subfamily. In terms of assembly, homotetramer. Residues from neighboring subunits contribute catalytic and substrate-binding residues to each active site.

It carries out the reaction N(6)-(1,2-dicarboxyethyl)-AMP = fumarate + AMP. The enzyme catalyses (2S)-2-[5-amino-1-(5-phospho-beta-D-ribosyl)imidazole-4-carboxamido]succinate = 5-amino-1-(5-phospho-beta-D-ribosyl)imidazole-4-carboxamide + fumarate. The protein operates within purine metabolism; AMP biosynthesis via de novo pathway; AMP from IMP: step 2/2. It participates in purine metabolism; IMP biosynthesis via de novo pathway; 5-amino-1-(5-phospho-D-ribosyl)imidazole-4-carboxamide from 5-amino-1-(5-phospho-D-ribosyl)imidazole-4-carboxylate: step 2/2. In terms of biological role, catalyzes two reactions in de novo purine nucleotide biosynthesis. Catalyzes the breakdown of 5-aminoimidazole- (N-succinylocarboxamide) ribotide (SAICAR or 2-[5-amino-1-(5-phospho-beta-D-ribosyl)imidazole-4-carboxamido]succinate) to 5-aminoimidazole-4-carboxamide ribotide (AICAR or 5-amino-1-(5-phospho-beta-D-ribosyl)imidazole-4-carboxamide) and fumarate, and of adenylosuccinate (ADS or N(6)-(1,2-dicarboxyethyl)-AMP) to adenosine monophosphate (AMP) and fumarate. The protein is Adenylosuccinate lyase (purB) of Helicobacter pylori (strain ATCC 700392 / 26695) (Campylobacter pylori).